The chain runs to 31 residues: Protein YmiC (31 aa).

The helical transmembrane segment at 9–29 (WSWMGAFSLSMLFWAELLWII) threads the bilayer.

Its subcellular location is the cell inner membrane. This is Protein YmiC from Escherichia coli (strain K12).